A 58-amino-acid polypeptide reads, in one-letter code: Potassium channel toxin alpha-KTx 26.2 (58 aa).

Residues 1-19 form the signal peptide; sequence MKTIFVVILVLFVLSAMLA. Intrachain disulfides connect cysteine 31–cysteine 49, cysteine 35–cysteine 54, and cysteine 39–cysteine 56.

It belongs to the short scorpion toxin superfamily. Potassium channel inhibitor family. Alpha-KTx 26 subfamily. As to expression, expressed by the venom gland.

It is found in the secreted. Inhibits voltage-gated potassium channels. In Lychas mucronatus (Chinese swimming scorpion), this protein is Potassium channel toxin alpha-KTx 26.2.